We begin with the raw amino-acid sequence, 309 residues long: MDSKEVLVHVKNLEKNKSNDAAVLEILHVLDKEFVPTEKLLRETKVGVEVNKFKKSTNVEISKLVKKMISSWKDAINKNKRSRQAQQHHQDHAPGNAEDKTTVGESVNGVQQPASSQSDAMKQDKYVSTKPRNSKNDGVDTAIYHHKLRDQVLKALYDVLAKESEHPPQSILHTAKAIESEMNKVNNCDTNEAAYKARYRIIYSNVISKNNPDLKHKIANGDITPEFLATCDAKDLAPAPLKQKIEEIAKQNLYNAQGATIERSVTDRFTCGKCKEKKVSYYQLQTRSADEPLTTFCTCEACGNRWKFS.

Residues 5 to 79 form the TFIIS N-terminal domain; sequence EVLVHVKNLE…SSWKDAINKN (75 aa). A disordered region spans residues 78-142; sequence KNKRSRQAQQ…NSKNDGVDTA (65 aa). Positions 88 to 102 are enriched in basic and acidic residues; sequence HHQDHAPGNAEDKTT. A compositionally biased stretch (polar residues) spans 103–120; the sequence is VGESVNGVQQPASSQSDA. Serine 116 carries the phosphoserine modification. The region spanning 148–264 is the TFIIS central domain; sequence LRDQVLKALY…NAQGATIERS (117 aa). A TFIIS-type zinc finger spans residues 267–307; it reads DRFTCGKCKEKKVSYYQLQTRSADEPLTTFCTCEACGNRWK. The Zn(2+) site is built by cysteine 271, cysteine 274, cysteine 299, and cysteine 302.

The protein belongs to the TFS-II family.

It is found in the nucleus. Its function is as follows. Necessary for efficient RNA polymerase II transcription elongation past template-encoded arresting sites. The arresting sites in DNA have the property of trapping a certain fraction of elongating RNA polymerases that pass through, resulting in locked ternary complexes. Cleavage of the nascent transcript by S-II allows the resumption of elongation from the new 3'-terminus. Functionally, can promote the transfer of one strand of a double-stranded DNA molecule to a homologous single strand and thus may be involved in recombination. This chain is Transcription elongation factor S-II (DST1), found in Saccharomyces cerevisiae (strain ATCC 204508 / S288c) (Baker's yeast).